We begin with the raw amino-acid sequence, 293 residues long: Probable endoribonuclease YicC (293 aa).

Belongs to the YicC/YloC family. A divalent metal cation is required as a cofactor.

Negatively modulates sporulation, probably in response to nutrient conditions. Effects expression of sporulation regulator spo0A in an indirect manner, possibly via repression of the sinRR' operon. Its function is as follows. Probably a ssRNA endonuclease. Functionally, might contribute to small RNA (sRNA) regulation. The polypeptide is Probable endoribonuclease YicC (Clostridioides difficile (strain 630) (Peptoclostridium difficile)).